The following is a 114-amino-acid chain: Hydrogenase maturation factor HypA (114 aa).

A Ni(2+)-binding site is contributed by His-2. Cys-73, Cys-76, Cys-90, and Cys-93 together coordinate Zn(2+).

This sequence belongs to the HypA/HybF family.

Its function is as follows. Involved in the maturation of [NiFe] hydrogenases. Required for nickel insertion into the metal center of the hydrogenase. In Klebsiella pneumoniae (strain 342), this protein is Hydrogenase maturation factor HypA.